The following is a 240-amino-acid chain: LexA repressor (240 aa).

The H-T-H motif DNA-binding region spans 26 to 46 (FDEMKDALDLASKSGIHRLIT). Active-site for autocatalytic cleavage activity residues include S160 and K198.

Belongs to the peptidase S24 family. As to quaternary structure, homodimer.

It catalyses the reaction Hydrolysis of Ala-|-Gly bond in repressor LexA.. In terms of biological role, represses a number of genes involved in the response to DNA damage (SOS response), including recA and lexA. In the presence of single-stranded DNA, RecA interacts with LexA causing an autocatalytic cleavage which disrupts the DNA-binding part of LexA, leading to derepression of the SOS regulon and eventually DNA repair. The polypeptide is LexA repressor (Agrobacterium fabrum (strain C58 / ATCC 33970) (Agrobacterium tumefaciens (strain C58))).